The following is a 78-amino-acid chain: Large ribosomal subunit protein eL20 (78 aa).

It belongs to the eukaryotic ribosomal protein eL20 family. In terms of assembly, part of the 50S ribosomal subunit. Binds 23S rRNA.

The polypeptide is Large ribosomal subunit protein eL20 (Pyrobaculum calidifontis (strain DSM 21063 / JCM 11548 / VA1)).